Here is a 282-residue protein sequence, read N- to C-terminus: Biotin synthase (282 aa).

The Radical SAM core domain maps to 1–228 (MQEIFLCSIS…NARLMVAGGR (228 aa)). [4Fe-4S] cluster-binding residues include Cys-17, Cys-21, and Cys-24. The [2Fe-2S] cluster site is built by Cys-61, Cys-96, Cys-154, and Arg-221.

The protein belongs to the radical SAM superfamily. Biotin synthase family. Homodimer. The cofactor is [4Fe-4S] cluster. It depends on [2Fe-2S] cluster as a cofactor.

It catalyses the reaction (4R,5S)-dethiobiotin + (sulfur carrier)-SH + 2 reduced [2Fe-2S]-[ferredoxin] + 2 S-adenosyl-L-methionine = (sulfur carrier)-H + biotin + 2 5'-deoxyadenosine + 2 L-methionine + 2 oxidized [2Fe-2S]-[ferredoxin]. Its pathway is cofactor biosynthesis; biotin biosynthesis; biotin from 7,8-diaminononanoate: step 2/2. In terms of biological role, catalyzes the conversion of dethiobiotin (DTB) to biotin by the insertion of a sulfur atom into dethiobiotin via a radical-based mechanism. This is Biotin synthase from Helicobacter pylori (strain ATCC 700392 / 26695) (Campylobacter pylori).